Consider the following 473-residue polypeptide: BTB/POZ domain-containing protein KCTD8 (473 aa).

Residues 1–36 form a disordered region; that stretch reads MALKDTGSGGSTILPISEMVSSSSSPGASAAAAPGP. A compositionally biased stretch (low complexity) spans 21–35; that stretch reads SSSSSPGASAAAAPG. The BTB domain maps to 44-122; sequence EVVELNVGGQ…LRDKQLALPE (79 aa). Residue serine 78 is modified to Phosphoserine. Position 80 is an omega-N-methylarginine (arginine 80). The disordered stretch occupies residues 326–409; it reads IVSPKQEHED…WIPPPDKRRN (84 aa). Residues 330–346 are compositionally biased toward basic and acidic residues; the sequence is KQEHEDRKHDKVTDKGS. The span at 347–388 shows a compositional bias: polar residues; sequence ESGTSCNELSTSSCDSHSEASTPQDNPSSAQQATAHQPNTLT. Serine 410 is modified (phosphoserine).

As to quaternary structure, interacts as a tetramer with GABRB1 and GABRB2.

It is found in the presynaptic cell membrane. Its subcellular location is the postsynaptic cell membrane. Its function is as follows. Auxiliary subunit of GABA-B receptors that determine the pharmacology and kinetics of the receptor response. Increases agonist potency and markedly alter the G-protein signaling of the receptors by accelerating onset and promoting desensitization. The polypeptide is BTB/POZ domain-containing protein KCTD8 (KCTD8) (Homo sapiens (Human)).